We begin with the raw amino-acid sequence, 97 residues long: Citrate lyase acyl carrier protein (97 aa).

Ser14 bears the O-(phosphoribosyl dephospho-coenzyme A)serine mark.

Belongs to the CitD family. As to quaternary structure, oligomer with a subunit composition of (alpha,beta,gamma)6.

The protein resides in the cytoplasm. Its function is as follows. Covalent carrier of the coenzyme of citrate lyase. The sequence is that of Citrate lyase acyl carrier protein from Escherichia fergusonii (strain ATCC 35469 / DSM 13698 / CCUG 18766 / IAM 14443 / JCM 21226 / LMG 7866 / NBRC 102419 / NCTC 12128 / CDC 0568-73).